The chain runs to 151 residues: uncharacterized protein (151 aa).

This is an uncharacterized protein from Mycoplasma genitalium (strain ATCC 33530 / DSM 19775 / NCTC 10195 / G37) (Mycoplasmoides genitalium).